We begin with the raw amino-acid sequence, 255 residues long: tRNA (guanine-N(1)-)-methyltransferase (255 aa).

Residues Gly114 and 134–139 (IGDYIL) contribute to the S-adenosyl-L-methionine site.

The protein belongs to the RNA methyltransferase TrmD family. Homodimer.

It is found in the cytoplasm. The enzyme catalyses guanosine(37) in tRNA + S-adenosyl-L-methionine = N(1)-methylguanosine(37) in tRNA + S-adenosyl-L-homocysteine + H(+). Its function is as follows. Specifically methylates guanosine-37 in various tRNAs. The chain is tRNA (guanine-N(1)-)-methyltransferase from Blochmanniella pennsylvanica (strain BPEN).